Consider the following 232-residue polypeptide: Large ribosomal subunit protein uL1 (232 aa).

The protein belongs to the universal ribosomal protein uL1 family. As to quaternary structure, part of the 50S ribosomal subunit.

In terms of biological role, binds directly to 23S rRNA. The L1 stalk is quite mobile in the ribosome, and is involved in E site tRNA release. Its function is as follows. Protein L1 is also a translational repressor protein, it controls the translation of the L11 operon by binding to its mRNA. The sequence is that of Large ribosomal subunit protein uL1 from Methylorubrum populi (strain ATCC BAA-705 / NCIMB 13946 / BJ001) (Methylobacterium populi).